Consider the following 161-residue polypeptide: MLTHLDSQGRANMVDVTDKAVTSREAVAEALVRMLPATLQMIVSGGHPKGDVFAVARIAGIQAAKKTSDLIPLCHPLMLTSIKVHLAAEGDNAVRITASCKLSGQTGVEMEALTAASIAALTIYDMCKAVDRGMVIESVRLLEKLGGKSGHFIADDAQVAP.

Residues 73-75 (LCH) and 110-111 (ME) each bind substrate. Asp-125 is a catalytic residue.

Belongs to the MoaC family. As to quaternary structure, homohexamer; trimer of dimers.

The enzyme catalyses (8S)-3',8-cyclo-7,8-dihydroguanosine 5'-triphosphate = cyclic pyranopterin phosphate + diphosphate. It functions in the pathway cofactor biosynthesis; molybdopterin biosynthesis. Its function is as follows. Catalyzes the conversion of (8S)-3',8-cyclo-7,8-dihydroguanosine 5'-triphosphate to cyclic pyranopterin monophosphate (cPMP). This Pseudomonas syringae pv. tomato (strain ATCC BAA-871 / DC3000) protein is Cyclic pyranopterin monophosphate synthase.